Here is a 579-residue protein sequence, read N- to C-terminus: MLRTHTCGELRVEDEGKKVKLCGWVDRIRDLGGVRFIDLRDRYGETQIVCDVNSKAYETVDELTRESVVLVEGTVRRRPEGTENPNIATGEIEVVAERIEILSKAEPLPFYPNETPKEEMRLRYRYIDLRSKRMRDNIILRYNITRVIRRYFDELGFLEIETPFLTKSTPEGARDFLVPSRLRPGKFYALPQSPQLFKQLLMISGFDRYFQIVRCFRDEDLRADRQPEFTQVDVEMSFVDVEDVLSVSEGMIARVFREAIGMDLKTPFDRITYSEAMEKYGTDKPDRRYGMELRDLGYAFEGTTFRVIRSVLEEGGSVKGFVVPEFASEMTRKKGDELMERAKELGLGGLIWFKVEEKIVSPHLKHLEREFKTIVEKENLKEGDVCLIAAHKDRNLLNEALGTLRLEIGKEYFSHLAKGFDILWVVDFPYFEWSEEEERFVARHHPFTMPVEETLGDDHTKVKAKAYDIVINGYEVGGGSIRIHKREIQEKIFKLLGMREEEAREKFGFFLEAFKYGVPPHGGIAFGLDRLVAIIAGENSIREVIPFPKTGNGVCLLTGAPSSVDEKQLRELRIRVEEG.

Glutamate 171 lines the L-aspartate pocket. Positions 195–198 (QLFK) are aspartate. Position 217 (arginine 217) interacts with L-aspartate. Residues 217–219 (RDE) and glutamine 226 each bind ATP. Position 444 (histidine 444) interacts with L-aspartate. Glutamate 475 is a binding site for ATP. Arginine 482 lines the L-aspartate pocket. 527–530 (GLDR) lines the ATP pocket.

The protein belongs to the class-II aminoacyl-tRNA synthetase family. Type 1 subfamily. In terms of assembly, homodimer.

The protein localises to the cytoplasm. The enzyme catalyses tRNA(Asx) + L-aspartate + ATP = L-aspartyl-tRNA(Asx) + AMP + diphosphate. In terms of biological role, aspartyl-tRNA synthetase with relaxed tRNA specificity since it is able to aspartylate not only its cognate tRNA(Asp) but also tRNA(Asn). Reaction proceeds in two steps: L-aspartate is first activated by ATP to form Asp-AMP and then transferred to the acceptor end of tRNA(Asp/Asn). In Thermotoga neapolitana (strain ATCC 49049 / DSM 4359 / NBRC 107923 / NS-E), this protein is Aspartate--tRNA(Asp/Asn) ligase.